A 330-amino-acid polypeptide reads, in one-letter code: MTDLSEKVRAWGRRLLVGAAAAVTLPGLIGLAGGAATANAFSRPGLPVEYLQVPSAGMGRDIKVQFQSGGNGSPAVYLLDGLRAQDDYNGWDINTPAFEWYYQSGLSVIMPVGGQSSFYADWYQPACGKAGCSTYKWETFLTSELPSYLASNKGVKRTGNAAVGISMSGSSAMILAVNHPDQFIYAGSLSALLDPSQGMGPSLIGLAMGDAGGYKADAMWGPSSDPAWQRNDPSLHIPELVGHNTRLWLYCGNGTPSELGGANMPAEFLENFVRSSNLKFQDAYNGAGGHNAVFNFNANGTHSWEYWGAQLNAMKPDLQGTLGASPGGGG.

Positions 1 to 40 are cleaved as a signal peptide; that stretch reads MTDLSEKVRAWGRRLLVGAAAAVTLPGLIGLAGGAATANA. 82-83 contacts substrate; it reads LR. A fibronectin-binding region spans residues 98-108; sequence FEWYYQSGLSV. A disulfide bond links Cys-127 and Cys-132. Residues Ser-166 and Asp-194 each contribute to the substrate site. The Nucleophile role is filled by Ser-166. Residue Glu-270 is part of the active site. Substrate contacts are provided by residues 272 to 275, Lys-279, and 302 to 304; these read FVRS and HSW. The active site involves His-302.

The protein belongs to the mycobacterial A85 antigen family.

It is found in the secreted. It carries out the reaction 2 alpha,alpha'-trehalose 6-mycolate = alpha,alpha'-trehalose 6,6'-bismycolate + alpha,alpha-trehalose. It catalyses the reaction an acyl-CoA + a 1,2-diacyl-sn-glycerol = a triacyl-sn-glycerol + CoA. In terms of biological role, the antigen 85 proteins (FbpA, FbpB, FbpC) are responsible for the high affinity of mycobacteria for fibronectin, a large adhesive glycoprotein, which facilitates the attachment of M.tuberculosis to murine alveolar macrophages (AMs). They also help to maintain the integrity of the cell wall by catalyzing the transfer of mycolic acids to cell wall arabinogalactan and through the synthesis of alpha,alpha-trehalose dimycolate (TDM, cord factor). They catalyze the transfer of a mycoloyl residue from one molecule of alpha,alpha-trehalose monomycolate (TMM) to another TMM, leading to the formation of TDM. The chain is Diacylglycerol acyltransferase/mycolyltransferase Ag85B (fbpB) from Mycobacterium avium.